Consider the following 389-residue polypeptide: MKISSLGWVLVLIFISITIVSSAPAPKPPKPKPAPAPTPPKPKPTPAPTPPKPKPKPAPTPPKPKPAPAPTPPKPKPAPAPTPPKPKPKPAPTPPNPKPTPAPTPPKPKPAPAPAPTPAPKPKPAPKPAPGGEVEDETEFSYETKGNKGPAKWGTLDAEWKMCGIGKMQSPIDLRDKNVVVSNKFGLLRSQYLPSNTTIKNRGHDIMLKFKGGNKGIGVTIRGTRYQLQQLHWHSPSEHTINGKRFALEEHLVHESKDKRYAVVAFLYNLGASDPFLFSLEKQLKKITDTHASEEHVGIIDPKKLSFESKHYYRYSGSLTAPPCSENVIWSVSKEIRTVSSKQVKLLRVAVHDASDSNARPLQAVNKRKVYLYKPKVKLMKKYCNISSY.

The N-terminal stretch at 1–22 (MKISSLGWVLVLIFISITIVSS) is a signal peptide. Residues 21–153 (SSAPAPKPPK…TKGNKGPAKW (133 aa)) form a disordered region. Residues 25–129 (APKPPKPKPA…PKPKPAPKPA (105 aa)) are compositionally biased toward pro residues. The region spanning 138–374 (TEFSYETKGN…VNKRKVYLYK (237 aa)) is the Alpha-carbonic anhydrase domain. Cysteines 163 and 324 form a disulfide. N-linked (GlcNAc...) asparagine glycosylation is present at asparagine 196. Residue histidine 204 is the Proton acceptor of the active site. Zn(2+)-binding residues include histidine 232, histidine 234, and histidine 251. 320–321 (TA) is a binding site for substrate. Asparagine 385 carries an N-linked (GlcNAc...) asparagine glycan.

The protein belongs to the alpha-class carbonic anhydrase family. It depends on Zn(2+) as a cofactor. Post-translationally, N-glycosylated.

Its subcellular location is the plastid. It is found in the chloroplast stroma. The catalysed reaction is hydrogencarbonate + H(+) = CO2 + H2O. Its function is as follows. Reversible hydration of carbon dioxide. This is Alpha carbonic anhydrase 8 (ACA8) from Arabidopsis thaliana (Mouse-ear cress).